A 146-amino-acid chain; its full sequence is Spermidine export protein MdtJ (146 aa).

A run of 4 helical transmembrane segments spans residues 1–21 (MIYW…TLSM), 31–51 (TGMI…AIAV), 54–74 (VALG…ITTF), and 76–96 (VLWF…MLIA).

This sequence belongs to the drug/metabolite transporter (DMT) superfamily. Small multidrug resistance (SMR) (TC 2.A.7.1) family. MdtJ subfamily. As to quaternary structure, forms a complex with MdtI.

Its subcellular location is the cell inner membrane. In terms of biological role, catalyzes the excretion of spermidine. The protein is Spermidine export protein MdtJ of Proteus mirabilis (strain HI4320).